Reading from the N-terminus, the 225-residue chain is Methylthioribulose-1-phosphate dehydratase (225 aa).

Residues H106 and H108 each contribute to the Zn(2+) site.

Belongs to the aldolase class II family. MtnB subfamily. The cofactor is Zn(2+).

It catalyses the reaction 5-(methylsulfanyl)-D-ribulose 1-phosphate = 5-methylsulfanyl-2,3-dioxopentyl phosphate + H2O. Its pathway is amino-acid biosynthesis; L-methionine biosynthesis via salvage pathway; L-methionine from S-methyl-5-thio-alpha-D-ribose 1-phosphate: step 2/6. Functionally, catalyzes the dehydration of methylthioribulose-1-phosphate (MTRu-1-P) into 2,3-diketo-5-methylthiopentyl-1-phosphate (DK-MTP-1-P). This Xanthomonas oryzae pv. oryzae (strain PXO99A) protein is Methylthioribulose-1-phosphate dehydratase.